Here is a 124-residue protein sequence, read N- to C-terminus: MSTKINSLLEEIKSLTLLEAAELVKQMETTFGIDASAVATAAPAVQVETKKEEKTEFALVLSQVPADKKINVLKVVRTITGLGLKEAKELVDSVPKTLKEGLSASEAEQLKTQLTEAGAQVELK.

It belongs to the bacterial ribosomal protein bL12 family. As to quaternary structure, homodimer. Part of the ribosomal stalk of the 50S ribosomal subunit. Forms a multimeric L10(L12)X complex, where L10 forms an elongated spine to which 2 to 4 L12 dimers bind in a sequential fashion. Binds GTP-bound translation factors.

The protein localises to the plastid. Its subcellular location is the chloroplast. Forms part of the ribosomal stalk which helps the ribosome interact with GTP-bound translation factors. Is thus essential for accurate translation. The sequence is that of Large ribosomal subunit protein bL12c from Cyanidioschyzon merolae (strain NIES-3377 / 10D) (Unicellular red alga).